The primary structure comprises 356 residues: Heparan sulfate 2-O-sulfotransferase 1 (356 aa).

Topologically, residues 1–11 are cytoplasmic; that stretch reads MGLLRIMLPPK. Residues 12 to 28 traverse the membrane as a helical; Signal-anchor for type II membrane protein segment; that stretch reads LQLLAVLVFGVAVLFLE. Residues 24-51 adopt a coiled-coil conformation; that stretch reads VLFLENQIQKLEESRGKLERAIARHEVR. Topologically, residues 29–356 are lumenal; the sequence is NQIQKLEESR…FYEKIYPKSN (328 aa). Adenosine 3',5'-bisphosphate-binding residues include Lys83, Thr84, Ala85, Ser86, Thr87, and Ser88. Asn108 and Asn127 each carry an N-linked (GlcNAc...) asparagine glycan. Active-site residues include His140 and His142. Positions 164 and 172 each coordinate adenosine 3',5'-bisphosphate. 2 disulfide bridges follow: Cys201–Cys209 and Cys222–Cys228. Adenosine 3',5'-bisphosphate-binding residues include Tyr279, Ser285, Thr290, and Lys293.

It belongs to the sulfotransferase 3 family. As to quaternary structure, homotrimer. Expressed in heart, limb, head and trunk. At stages 20 and 24, it is expressed in the most regions of the first and second pharyngeal arche. In both wing and leg buds, it is detected at the overlying ectoderm and mesenchyme throughout stages 21, 23 and 24.

It is found in the golgi apparatus membrane. Its function is as follows. Catalyzes the transfer of a sulfo group from 3'-phospho-5'-adenylyl sulfate (PAPS) to the 2-OH position of iduronic acid (IdoA) or glucuronic acid (GlcA) within the heparan sulfate (HS) chain and participates in HS biosynthesis. The polypeptide is Heparan sulfate 2-O-sulfotransferase 1 (Gallus gallus (Chicken)).